The chain runs to 278 residues: Putative non-heme haloperoxidase (278 aa).

The 217-residue stretch at 24-240 folds into the AB hydrolase-1 domain; that stretch reads PLVFLHGLSV…STAKITNASF (217 aa). Catalysis depends on residues Ser97 and Asp221.

This sequence belongs to the AB hydrolase superfamily.

The polypeptide is Putative non-heme haloperoxidase (59.2) (Mycobacterium (Mycobacteriophage D29)).